The chain runs to 335 residues: Rho guanine nucleotide exchange factor 39 (335 aa).

A DH domain is found at 22-197; that stretch reads KRACTARELL…SETAQRVHTI (176 aa). Residues 227–331 form the PH domain; the sequence is WFLRQGWLLV…WYHSLTLAIS (105 aa).

It is found in the cell membrane. Promotes cell proliferation. This chain is Rho guanine nucleotide exchange factor 39 (ARHGEF39), found in Bos taurus (Bovine).